A 301-amino-acid polypeptide reads, in one-letter code: Polyamine aminopropyltransferase (301 aa).

The region spanning 4 to 240 (WHWLLEWQTP…GLWGFVYGGV (237 aa)) is the PABS domain. Gln33 is an S-methyl-5'-thioadenosine binding site. The spermidine site is built by His64 and Glu89. Residues Asp109 and 141–142 (DG) each bind S-methyl-5'-thioadenosine. Asp159 serves as the catalytic Proton acceptor.

The protein belongs to the spermidine/spermine synthase family. As to quaternary structure, homodimer or homotetramer.

Its subcellular location is the cytoplasm. It carries out the reaction S-adenosyl 3-(methylsulfanyl)propylamine + putrescine = S-methyl-5'-thioadenosine + spermidine + H(+). It participates in amine and polyamine biosynthesis; spermidine biosynthesis; spermidine from putrescine: step 1/1. Catalyzes the irreversible transfer of a propylamine group from the amino donor S-adenosylmethioninamine (decarboxy-AdoMet) to putrescine (1,4-diaminobutane) to yield spermidine. The polypeptide is Polyamine aminopropyltransferase (Saccharolobus islandicus (strain L.S.2.15 / Lassen #1) (Sulfolobus islandicus)).